The following is a 185-amino-acid chain: Homeobox-leucine zipper protein ATHB-22 (185 aa).

The segment at residues threonine 76–glutamine 135 is a DNA-binding region (homeobox). Positions leucine 136–leucine 164 are leucine-zipper.

It belongs to the HD-ZIP homeobox family. Class I subfamily. Expressed in siliques.

It is found in the nucleus. Its function is as follows. Probable transcription factor. The sequence is that of Homeobox-leucine zipper protein ATHB-22 (ATHB-22) from Arabidopsis thaliana (Mouse-ear cress).